We begin with the raw amino-acid sequence, 263 residues long: Phosphatidylglycerol--prolipoprotein diacylglyceryl transferase (263 aa).

4 helical membrane-spanning segments follow: residues 6–26, 50–70, 85–105, and 112–132; these read VIFSIGPVSIYWYSLAYVLGI, LLTATIVGIILGGRLGYVLIY, TWEGGMSFHGGAIGVLLAVII, and IPIFYALDLVSCGVPIGLFLG. An a 1,2-diacyl-sn-glycero-3-phospho-(1'-sn-glycerol)-binding site is contributed by Arg-133. A run of 3 helical transmembrane segments spans residues 169–189, 197–217, and 233–253; these read LYEALFEGLLLFAVANSLFFL, GALTGIAVMWYGIARFFVEFF, and MGQLLSIPMVLLGMLVYLGAL.

Belongs to the Lgt family.

Its subcellular location is the cell membrane. It catalyses the reaction L-cysteinyl-[prolipoprotein] + a 1,2-diacyl-sn-glycero-3-phospho-(1'-sn-glycerol) = an S-1,2-diacyl-sn-glyceryl-L-cysteinyl-[prolipoprotein] + sn-glycerol 1-phosphate + H(+). It participates in protein modification; lipoprotein biosynthesis (diacylglyceryl transfer). In terms of biological role, catalyzes the transfer of the diacylglyceryl group from phosphatidylglycerol to the sulfhydryl group of the N-terminal cysteine of a prolipoprotein, the first step in the formation of mature lipoproteins. This Wolbachia sp. subsp. Drosophila simulans (strain wRi) protein is Phosphatidylglycerol--prolipoprotein diacylglyceryl transferase.